Reading from the N-terminus, the 219-residue chain is MDFPPKVVASVTSKDDAKEAIALGADVVEVRVDLVGGDGPGLVESIYYDIGCPIIVTIRPKFEGGEFDGTDAERVQLFKKLTPYADFADFELRAKNLDELLTTITGTDAVPIVSYHDFDRTPSNEEMLSIINRSVEKGAIGKLAVMPKDMTDVLRLLEITLKSKRPVCTISMGSLGQHSRLVAPVYGSLLTYGYVRRPVAPGQIRVDQLLEGLRILGLR.

Residues Ser-10, 29–31 (EVR), and Arg-59 each bind 3-dehydroquinate. His-116 functions as the Proton donor/acceptor in the catalytic mechanism. Catalysis depends on Lys-142, which acts as the Schiff-base intermediate with substrate. Residues Arg-180 and Gln-203 each coordinate 3-dehydroquinate.

Belongs to the type-I 3-dehydroquinase family. As to quaternary structure, homodimer.

It carries out the reaction 3-dehydroquinate = 3-dehydroshikimate + H2O. The protein operates within metabolic intermediate biosynthesis; chorismate biosynthesis; chorismate from D-erythrose 4-phosphate and phosphoenolpyruvate: step 3/7. In terms of biological role, involved in the third step of the chorismate pathway, which leads to the biosynthesis of aromatic amino acids. Catalyzes the cis-dehydration of 3-dehydroquinate (DHQ) and introduces the first double bond of the aromatic ring to yield 3-dehydroshikimate. This chain is 3-dehydroquinate dehydratase, found in Methanocella arvoryzae (strain DSM 22066 / NBRC 105507 / MRE50).